A 445-amino-acid chain; its full sequence is Putative H/ACA ribonucleoprotein complex subunit 4 (445 aa).

The interval 1 to 32 is disordered; the sequence is MGKKDKRSKLEGDDLAEAQQKGSFQLPSSNET. Polar residues predominate over residues 20-32; the sequence is QKGSFQLPSSNET. Asp113 serves as the catalytic Nucleophile. Residues 284 to 359 enclose the PUA domain; it reads HKRVVVKDSC…VVAKSKRVIM (76 aa). Residues 386 to 445 form a disordered region; that stretch reads LDKFGKPNDTTPKSWAKEYVQTSTKKEVKKEETPDEEEEEAPKKKSKKSKKQESSDSDSD.

The protein belongs to the pseudouridine synthase TruB family. Component of the small nucleolar ribonucleoprotein particle containing H/ACA-type snoRNAs (H/ACA snoRNPs).

It is found in the nucleus. The protein resides in the nucleolus. It catalyses the reaction a uridine in RNA = a pseudouridine in RNA. Functionally, plays a central role in ribosomal RNA processing. Probable catalytic subunit of H/ACA small nucleolar ribonucleoprotein (H/ACA snoRNP) complex, which catalyzes pseudouridylation of rRNA. This involves the isomerization of uridine such that the ribose is subsequently attached to C5, instead of the normal N1. Pseudouridine ('psi') residues may serve to stabilize the conformation of rRNAs. The sequence is that of Putative H/ACA ribonucleoprotein complex subunit 4 from Caenorhabditis elegans.